A 141-amino-acid polypeptide reads, in one-letter code: Calcium-binding protein SPEC 2D (141 aa).

EF-hand domains follow at residues 10-42, 43-72, 73-107, and 108-141; these read DQIKEYKTKFDAFDRNNDGNFPTMFLGNAMKSV, GHVLTAAELENSRRVRKGTTTFPQFLAMIL, DKKCRKVFKAMDKDDKDKLLSADEVRQAMLSFDRQ, and ITEDKIKEMIEKADFPNDGKCSLEEFVKMVMNFC. Ca(2+) is bound by residues aspartate 23, asparagine 25, aspartate 27, and asparagine 29. 8 residues coordinate Ca(2+): aspartate 84, aspartate 86, lysine 90, aspartate 95, aspartate 121, aspartate 125, lysine 127, and glutamate 132.

In terms of tissue distribution, found in cell lineages giving rise to the aboral ectoderm, a squamous epithelium covering the surface of the late stage embryo and larva.

Calcium-binding protein involved in larval development and metamorphosis. Likely to function as calcium buffers mediating the transport of calcium from the sea water to the blastocoel where calcium is required for skeleton formation. This is Calcium-binding protein SPEC 2D (SPEC2D) from Strongylocentrotus purpuratus (Purple sea urchin).